The chain runs to 55 residues: Accessory gland-specific peptide 70A (55 aa).

The N-terminal stretch at Met-1 to Ser-19 is a signal peptide. Residues Trp-20 to Ile-33 form an essential for binding to sperm region. Hydroxyproline is present on residues Pro-28 and Pro-32. At Ile-33 the chain carries Isoleucine derivative. Pro-34, Pro-36, and Pro-38 each carry hydroxyproline. Residues Pro-36–Cys-55 are sufficient to induce PMR. Cysteines 43 and 55 form a disulfide.

This sequence belongs to the Drosophila sex peptide family. Post-translationally, sperm-bound protein is cleaved to release an active C-terminal peptide. Gradual release from stored sperm may function to prolong PMR and enhance male reproductive success. Main cells of the accessory glands of males (paragonial gland).

The protein localises to the secreted. Male seminal protein which triggers short- and long-term post-mating behavioral responses (PMR) in female Drosophila. Binds initially to sperm where it is later cleaved to release an active peptide within the female reproductive tract. Signals via the sex peptide receptor (SPR) in female flies; may also act via other receptors. Moderates the activity of distinct neuronal circuitries in the female genital tract to promote specific PMRs including: enhanced ovulation, increased egg laying rate, increased feeding/foraging rate, induced antimicrobial peptide synthesis, reduced mating receptivity, reduced day-time sleep and reduced lifespan in multiple mated females. The chain is Accessory gland-specific peptide 70A (SP) from Drosophila melanogaster (Fruit fly).